The following is a 149-amino-acid chain: Ribonuclease HI (149 aa).

The region spanning 1-140 (MIIGYFDGLC…AYELVRRGKL (140 aa)) is the RNase H type-1 domain. Mg(2+) contacts are provided by Asp-7, Glu-52, Asp-76, and Asp-125. Mn(2+) is bound by residues Asp-7, Glu-52, Asp-76, and Asp-125. A disulfide bridge connects residues Cys-58 and Cys-145.

In terms of assembly, monomer. It depends on Mn(2+) as a cofactor. Mg(2+) serves as cofactor. Co(2+) is required as a cofactor. The cofactor is Ni(2+). In terms of processing, the disulfide bond confers considerable stability to the protein.

It is found in the cytoplasm. The enzyme catalyses Endonucleolytic cleavage to 5'-phosphomonoester.. In terms of biological role, nuclease that specifically degrades the RNA of RNA-DNA hybrids. Endonucleolytically removes RNA primers from the Okazaki fragments of lagging strand synthesis on its own. In the presence of Mn(2+) or Co(2+) can also cleave an RNA-RNA hybrid; the dsRNase activity is 10- 100-fold lower than RNase H activity. Complements the temperature-sensitive phenotype of an E.coli double rnhA/rnhB (RNase H) disruption mutant. This Sulfurisphaera tokodaii (strain DSM 16993 / JCM 10545 / NBRC 100140 / 7) (Sulfolobus tokodaii) protein is Ribonuclease HI (rnhA).